A 115-amino-acid polypeptide reads, in one-letter code: NADH-ubiquinone oxidoreductase chain 3 (115 aa).

Helical transmembrane passes span 3-23 (LMLT…IAFW), 55-75 (FFLV…LLPL), and 86-106 (TMLT…AYEW).

This sequence belongs to the complex I subunit 3 family. As to quaternary structure, core subunit of respiratory chain NADH dehydrogenase (Complex I) which is composed of 45 different subunits. Interacts with TMEM186. Interacts with TMEM242.

It localises to the mitochondrion inner membrane. The catalysed reaction is a ubiquinone + NADH + 5 H(+)(in) = a ubiquinol + NAD(+) + 4 H(+)(out). Functionally, core subunit of the mitochondrial membrane respiratory chain NADH dehydrogenase (Complex I) which catalyzes electron transfer from NADH through the respiratory chain, using ubiquinone as an electron acceptor. Essential for the catalytic activity of complex I. This Ceratotherium simum (White rhinoceros) protein is NADH-ubiquinone oxidoreductase chain 3.